The sequence spans 473 residues: MSLGYAEKLSFIEDVGQVGMAEFFDPSHLLQCKIEELAKLIQKSKHLVVFTGAGISTSCGIPDFRGPKGIWTLQREGKDLPKASLPFHRAMPSMTHMALVELERAGILKFVISQNVDGLHLRSGIPREKLSELHGDSFMEMCPSCGAEYLRDFEVETIGLKETSRKCSVEKCGAKLKDTVLDWEDALPPKEIDPAEKHCKKADLVLCLGTSLQITPACNLPLKCLKGGGKIVIVNLQKTPKDKKANVVIHGLVDKVVAGVMESLNMKIPPYVRIDLFQIILTQSISGDQRFINWTLRVASVHGLTSQLPFIKSIEVSFSDNHNYKDAVLDKQPFLMKRRTARNETFDIFFKVNYSDGCDCVSTQLSLPFEFKISTEEHVEIIDKEAVLQSLREKAVEESSCGQSGVVERRVVSEPRSEAVVYATVTSLRTYHSQQSLLANGDLKWKLEGSGTSRKRSRTGKRKSKALAEETKA.

Positions 27-267 (SHLLQCKIEE…AGVMESLNMK (241 aa)) constitute a Deacetylase sirtuin-type domain. NAD(+) is bound by residues 52-71 (GAGI…KGIW) and 114-117 (QNVD). Histidine 134 (proton acceptor) is an active-site residue. Zn(2+) is bound by residues cysteine 142, cysteine 145, cysteine 167, and cysteine 172. NAD(+) is bound by residues 209-211 (GTS), 235-237 (NLQ), and valine 253. Residues 447 to 473 (LEGSGTSRKRSRTGKRKSKALAEETKA) are disordered. Residues 453-465 (SRKRSRTGKRKSK) show a composition bias toward basic residues.

Belongs to the sirtuin family. Class IV subfamily. In terms of assembly, binds to the promoter region of genes influenced by ethylene. Interacts with ENAP1; this interaction is enhanced in the presence of ethylene. Requires Zn(2+) as cofactor.

The protein localises to the nucleus. The catalysed reaction is N(6)-acetyl-L-lysyl-[protein] + NAD(+) + H2O = 2''-O-acetyl-ADP-D-ribose + nicotinamide + L-lysyl-[protein]. Its function is as follows. NAD-dependent protein deacetylase. Has deacetylase activity towards H3K9Ac. May have a function in the safeguard against genome instability and DNA damage to ensure plant cell growth. Involved in responses to ethylene leading to the transcriptional repression of some ethylene-responsive genes via the regulation of histone acetylation H3K9Ac. This chain is NAD-dependent protein deacetylase SRT1, found in Arabidopsis thaliana (Mouse-ear cress).